Here is a 325-residue protein sequence, read N- to C-terminus: DNA-directed RNA polymerase subunit alpha (325 aa).

The segment at 1-231 is alpha N-terminal domain (alpha-NTD); the sequence is MQTSLLKPKI…DQLSVFAALE (231 aa). Positions 246 to 325 are alpha C-terminal domain (alpha-CTD); that stretch reads IDPILLRPVD…ENWPPAGLDK (80 aa).

The protein belongs to the RNA polymerase alpha chain family. In terms of assembly, homodimer. The RNAP catalytic core consists of 2 alpha, 1 beta, 1 beta' and 1 omega subunit. When a sigma factor is associated with the core the holoenzyme is formed, which can initiate transcription.

It catalyses the reaction RNA(n) + a ribonucleoside 5'-triphosphate = RNA(n+1) + diphosphate. DNA-dependent RNA polymerase catalyzes the transcription of DNA into RNA using the four ribonucleoside triphosphates as substrates. The protein is DNA-directed RNA polymerase subunit alpha of Burkholderia thailandensis (strain ATCC 700388 / DSM 13276 / CCUG 48851 / CIP 106301 / E264).